A 471-amino-acid polypeptide reads, in one-letter code: MQQEATGGQKIRPIPIIASFLMAGFIGLFSETALNMALSDLIQVFDISSATVQWLTTGYLLTLGILVPISGLLLQWFTTRGLFFTAVSFSIAGTLIAALSPTFAMLMIGRVVQAVGTALLLPLMFNTILLIFPEHKRGSAMGMIGLVIMFAPAVGPTISGLILENLTWNWIFWISLPFLIIALLFGMKFMQNVSVVTKPKIDILSIILSTLGFGGVVFAFSSAGENGWGSATVLVSIIVGGIALGLFVWRQLTMEKPLMDLKVFKYPMFTLGLILVFISFMMILSTMILLPLYLQNSLALAAFSAGLVLLPGGVLNGLMSPFTGRLFDAYGPRALVIPGFIVAVIALFFLTRIEVGTSALTIIVLHSVLMIGISMVMMPAQTNGLNQLPPKLYPDGTAIMNTLQQVSGAIGTAVAITIMSAGQKAYMETAQGVGPEQMIASLTAGIQNAFVFGLIMACIGLLCSLFIRKAK.

Helical transmembrane passes span 15 to 34 (PIIA…ETAL), 55 to 77 (LTTG…LQWF), 82 to 104 (LFFT…PTFA), 111 to 131 (VVQA…ILLI), 141 to 163 (MGMI…GLIL), 170 to 187 (WIFW…LFGM), 202 to 224 (DILS…SSAG), 231 to 253 (ATVL…RQLT), 268 to 290 (MFTL…MILL), 297 to 319 (SLAL…NGLM), 329 to 351 (AYGP…FFLT), 358 to 380 (SALT…MMPA), and 445 to 467 (GIQN…SLFI).

Belongs to the major facilitator superfamily. EmrB family.

The protein resides in the cell membrane. Its function is as follows. Proton-dependent transporter. May mediate the efflux of lincomycin. In Listeria innocua serovar 6a (strain ATCC BAA-680 / CLIP 11262), this protein is Lincomycin resistance protein LmrB (lmrB).